Here is a 673-residue protein sequence, read N- to C-terminus: DNA ligase (673 aa).

Residues 33–37, 82–83, and Glu-117 each bind NAD(+); these read DSVYD and SL. Residue Lys-119 is the N6-AMP-lysine intermediate of the active site. NAD(+)-binding residues include Arg-140, Glu-177, Lys-295, and Lys-319. The Zn(2+) site is built by Cys-413, Cys-416, Cys-431, and Cys-436. The region spanning 595-673 is the BRCT domain; sequence AVSQVLAGKK…EAELLALDPK (79 aa).

This sequence belongs to the NAD-dependent DNA ligase family. LigA subfamily. It depends on Mg(2+) as a cofactor. Mn(2+) serves as cofactor.

It catalyses the reaction NAD(+) + (deoxyribonucleotide)n-3'-hydroxyl + 5'-phospho-(deoxyribonucleotide)m = (deoxyribonucleotide)n+m + AMP + beta-nicotinamide D-nucleotide.. Functionally, DNA ligase that catalyzes the formation of phosphodiester linkages between 5'-phosphoryl and 3'-hydroxyl groups in double-stranded DNA using NAD as a coenzyme and as the energy source for the reaction. It is essential for DNA replication and repair of damaged DNA. This chain is DNA ligase, found in Synechococcus sp. (strain JA-3-3Ab) (Cyanobacteria bacterium Yellowstone A-Prime).